The primary structure comprises 640 residues: Threonine--tRNA ligase (640 aa).

The region spanning 1 to 60 (MKITFPDGAVKEFEPGVSTADIAASISPGLKKKALAGKLNGELLDLVTPIHEDGAIEIVT) is the TGS domain. A catalytic region spans residues 241 to 538 (DHRKLGKELE…LIEEYKGAFP (298 aa)). Zn(2+)-binding residues include C334, H385, and H515.

It belongs to the class-II aminoacyl-tRNA synthetase family. In terms of assembly, homodimer. It depends on Zn(2+) as a cofactor.

The protein localises to the cytoplasm. The enzyme catalyses tRNA(Thr) + L-threonine + ATP = L-threonyl-tRNA(Thr) + AMP + diphosphate + H(+). Its function is as follows. Catalyzes the attachment of threonine to tRNA(Thr) in a two-step reaction: L-threonine is first activated by ATP to form Thr-AMP and then transferred to the acceptor end of tRNA(Thr). Also edits incorrectly charged L-seryl-tRNA(Thr). This Listeria monocytogenes serovar 1/2a (strain ATCC BAA-679 / EGD-e) protein is Threonine--tRNA ligase.